Consider the following 671-residue polypeptide: DNA ligase (671 aa).

NAD(+) contacts are provided by residues 32-36 (DAEYD), 81-82 (SL), and E113. K115 (N6-AMP-lysine intermediate) is an active-site residue. Residues R136, E173, K290, and K314 each coordinate NAD(+). Positions 408, 411, 426, and 432 each coordinate Zn(2+). A BRCT domain is found at 593–671 (EIDSPFAGKT…EAEMIRLLGA (79 aa)).

This sequence belongs to the NAD-dependent DNA ligase family. LigA subfamily. Requires Mg(2+) as cofactor. Mn(2+) serves as cofactor.

The enzyme catalyses NAD(+) + (deoxyribonucleotide)n-3'-hydroxyl + 5'-phospho-(deoxyribonucleotide)m = (deoxyribonucleotide)n+m + AMP + beta-nicotinamide D-nucleotide.. DNA ligase that catalyzes the formation of phosphodiester linkages between 5'-phosphoryl and 3'-hydroxyl groups in double-stranded DNA using NAD as a coenzyme and as the energy source for the reaction. It is essential for DNA replication and repair of damaged DNA. The protein is DNA ligase of Salmonella typhimurium (strain LT2 / SGSC1412 / ATCC 700720).